A 40-amino-acid polypeptide reads, in one-letter code: Spodomicin (40 aa).

3 cysteine pairs are disulfide-bonded: cysteine 6/cysteine 20, cysteine 10/cysteine 32, and cysteine 21/cysteine 39.

Monomer. Contains three disulfide bonds. In terms of tissue distribution, hemolymph.

The protein localises to the secreted. Functionally, fungicide. This is Spodomicin from Spodoptera littoralis (Egyptian cotton leafworm).